The following is a 23-amino-acid chain: Caerulein precursor fragment BM2 (23 aa).

Expressed by the skin glands.

The protein resides in the secreted. Antimicrobial peptide. This is Caerulein precursor fragment BM2 from Xenopus boumbaensis (Mawa clawed frog).